Here is a 995-residue protein sequence, read N- to C-terminus: DNA repair protein Rev1 (995 aa).

Residues 35 to 121 form the BRCT domain; that stretch reads RKSDLFQGIS…KIVDYKPYLL (87 aa). Disordered regions lie at residues 135–164 and 182–211; these read GKPK…DSTK and VATS…TTAR. The span at 136–164 shows a compositional bias: basic and acidic residues; it reads KPKDNGANESKSDVEPPKDKAEVEVDSTK. Residues 192–211 show a composition bias toward low complexity; that stretch reads ASESKITNLSTTSNNSTTAR. The UmuC domain maps to 275-505; sequence VMHIDMDCFF…MSLDLLPGVG (231 aa). Asp-279 contributes to the Mg(2+) binding site. Residues 361-367, Asn-373, and Asp-421 each bind dCTP; that span reads SCSYEAR. Asp-421 is a binding site for Mg(2+). The active site involves Glu-422. The interaction with PolI stretch occupies residues 696–868; that stretch reads SEMRKDKPIP…HYIRSDQIVA (173 aa). An interaction with PolH/DNApol-eta region spans residues 878–995; it reads VNPHILKLIS…IEYIRCIKCS (118 aa).

The protein belongs to the DNA polymerase type-Y family. In terms of assembly, interacts (via C-terminus) with PolH/DNApol-eta (via C-terminal regions). Interacts (via C-terminus) with PolI. The cofactor is Mg(2+).

The protein localises to the nucleus. Functionally, deoxycytidyl transferase involved in DNA repair. Transfers a dCMP residue from dCTP to the 3'-end of a DNA primer in a template-dependent reaction. May assist in the first step in the bypass of abasic lesions by the insertion of a nucleotide opposite the lesion. Required for normal induction of mutations by physical and chemical agents. During homologous recombination (HR) repair of DNA double-strand breaks (DSBs) regulates the extent of repair synthesis. Possibly recruits the DNA polymerase zeta complex or another translesion polymerase to early DSB repair intermediates to initiate repair synthesis, while also blocking the access of more processive polymerases preventing them from acting during the initial stages of HR repair. This chain is DNA repair protein Rev1, found in Drosophila melanogaster (Fruit fly).